The primary structure comprises 692 residues: SH3 domain-containing protein 21 (692 aa).

Residues Met-1–Tyr-60 form a disordered region. Residues Ser-65–Pro-126 enclose the SH3 domain. Disordered regions lie at residues Pro-132 to Pro-501, Pro-536 to Thr-605, and Val-672 to Tyr-692. Positions Pro-177–Ser-186 are enriched in basic and acidic residues. Residues Thr-210–Ser-220 are compositionally biased toward polar residues. 3 stretches are compositionally biased toward basic and acidic residues: residues Val-378 to Gln-396, Asn-490 to Pro-501, and Ser-542 to Val-582. Residues Ser-628–Lys-678 adopt a coiled-coil conformation. Over residues Met-673–Tyr-692 the composition is skewed to polar residues.

In Macaca fascicularis (Crab-eating macaque), this protein is SH3 domain-containing protein 21 (SH3D21).